The chain runs to 446 residues: Exodeoxyribonuclease 7 large subunit (446 aa).

The protein belongs to the XseA family. In terms of assembly, heterooligomer composed of large and small subunits.

Its subcellular location is the cytoplasm. The enzyme catalyses Exonucleolytic cleavage in either 5'- to 3'- or 3'- to 5'-direction to yield nucleoside 5'-phosphates.. Bidirectionally degrades single-stranded DNA into large acid-insoluble oligonucleotides, which are then degraded further into small acid-soluble oligonucleotides. This is Exodeoxyribonuclease 7 large subunit from Vibrio cholerae serotype O1 (strain ATCC 39315 / El Tor Inaba N16961).